Consider the following 356-residue polypeptide: Protein RecA (356 aa).

Gly68–Thr75 is an ATP binding site.

Belongs to the RecA family.

The protein localises to the cytoplasm. In terms of biological role, can catalyze the hydrolysis of ATP in the presence of single-stranded DNA, the ATP-dependent uptake of single-stranded DNA by duplex DNA, and the ATP-dependent hybridization of homologous single-stranded DNAs. It interacts with LexA causing its activation and leading to its autocatalytic cleavage. This chain is Protein RecA, found in Thermotoga petrophila (strain ATCC BAA-488 / DSM 13995 / JCM 10881 / RKU-1).